The primary structure comprises 198 residues: Large ribosomal subunit protein bL12m (198 aa).

The N-terminal 36 residues, 1-36, are a transit peptide targeting the mitochondrion; sequence MLPSATSLLRGPCLGLRAAALRLVRQQVPHVCAVRL. Positions 106 to 115 are enriched in low complexity; the sequence is GAAPAPTAPE. The segment at 106–126 is disordered; it reads GAAPAPTAPEAAEEDVPKQKE. 4 positions are modified to N6-acetyllysine: lysine 125, lysine 138, lysine 142, and lysine 144. N6-acetyllysine; alternate is present on lysine 150. Lysine 150 carries the N6-succinyllysine; alternate modification. Lysine 150 participates in a covalent cross-link: Glycyl lysine isopeptide (Lys-Gly) (interchain with G-Cter in ubiquitin). Lysine 162 carries the post-translational modification N6-succinyllysine. N6-acetyllysine is present on residues lysine 163 and lysine 173. Lysine 178 carries the N6-acetyllysine; alternate modification. At lysine 178 the chain carries N6-succinyllysine; alternate. Residue lysine 185 is modified to N6-acetyllysine.

Belongs to the bacterial ribosomal protein bL12 family. As to quaternary structure, component of the mitochondrial ribosome large subunit (39S) which comprises a 16S rRNA and about 50 distinct proteins. Interacts with NOA1. Two mature forms are produced by differential two-step proteolytic cleavage. Cleaved by the mitochondrial processing protease to produce the long mature form and subsequently by the mitochondrial intermediate protease to produce the short mature form. In terms of processing, in the presence of CUL3, undergoes 'Lys-63'-linked ubiquitination at Lys-150 which results in proteasomal degradation.

The protein localises to the mitochondrion matrix. As a component of the mitochondrial large ribosomal subunit, plays a role in mitochondrial translation. When present in mitochondria as a free protein not associated with the ribosome, associates with mitochondrial RNA polymerase POLRMT to activate transcription. Required for POLRMT stability. In Bos taurus (Bovine), this protein is Large ribosomal subunit protein bL12m (MRPL12).